Here is a 342-residue protein sequence, read N- to C-terminus: Large ribosomal subunit protein uL10 (342 aa).

A required for interaction with ribosomal protein L12 dimers region spans residues 212–342 (EYIDMLQKAY…ALAGLSALFG (131 aa)). Polar residues predominate over residues 299–308 (QAQVAVATQP). Residues 299–342 (QAQVAVATQPSEEEKKEEEKTEEEEKEEEASEEEALAGLSALFG) form a disordered region. Residues 318–333 (KTEEEEKEEEASEEEA) are compositionally biased toward acidic residues.

The protein belongs to the universal ribosomal protein uL10 family. Part of the 50S ribosomal subunit, binds large rRNA. Forms the ribosomal stalk which helps the ribosome interact with GTP-bound translation factors. Forms a heptameric L10(L12)2(L12)2(L12)2 complex, where L10 forms an elongated spine to which the L12 dimers bind in a sequential fashion.

In terms of biological role, forms the large subunit's ribosomal stalk, playing a central role in the interaction of the ribosome with elongation factors; the stalk complex of P.horikoshii binds to E.coli large subunits and confers on them the ability to interact with eukaryotic elongation factors. Each succesive L12 dimer bound along the P0 spine increases the GTPase activity of elongation factors and increases translation by reconsituted ribosomes, although the first site is the most stimulatory. The chain is Large ribosomal subunit protein uL10 from Pyrococcus horikoshii (strain ATCC 700860 / DSM 12428 / JCM 9974 / NBRC 100139 / OT-3).